Reading from the N-terminus, the 205-residue chain is Guanylyl cyclase-activating protein 1 (205 aa).

G2 is lipidated: N-myristoyl glycine. N3 bears the Deamidated asparagine mark. 4 EF-hand domains span residues 14–49, 51–86, 87–122, and 131–166; these read SSTE…KNLS, WASQ…VLKG, KVEQ…IRAI, and TAEE…DQML. Ca(2+)-binding residues include D64, N66, D68, Y70, E75, D100, D102, N104, C106, E111, D144, N146, D148, E150, and E155. Positions 185–205 are disordered; the sequence is NGEQDEEGASGRETEAAEADG.

As to quaternary structure, homodimer. Detected in the retina. Detected in rod and cone photoreceptor cells (at protein level). Also present in certain pinealocytes.

The protein resides in the membrane. The protein localises to the photoreceptor inner segment. It is found in the cell projection. It localises to the cilium. Its subcellular location is the photoreceptor outer segment. Stimulates retinal guanylyl cyclase when free calcium ions concentration is low and inhibits guanylyl cyclase when free calcium ions concentration is elevated. This Ca(2+)-sensitive regulation of retinal guanylyl cyclase is a key event in recovery of the dark state of rod photoreceptors following light exposure. May be involved in cone photoreceptor light response and recovery of response in bright light. In Bos taurus (Bovine), this protein is Guanylyl cyclase-activating protein 1 (GUCA1A).